The primary structure comprises 478 residues: PRAME family member 27 (478 aa).

An LRR 1 repeat occupies Arg17–Pro40. The stretch at Arg99 to Ser126 is one LRR 1; degenerate repeat. The LRR 2; degenerate repeat unit spans residues His181–Asn205. Residues Leu206 to His232 form an LRR 3; degenerate repeat. An LRR 4; degenerate repeat occupies Met233–Lys268. LRR repeat units follow at residues Leu269 to Leu294, Lys295 to Lys326, Thr327 to Glu348, Ala351 to Arg378, and Cys379 to His403.

It belongs to the PRAME family.

The protein is PRAME family member 27 of Homo sapiens (Human).